We begin with the raw amino-acid sequence, 360 residues long: Phenylalanine--tRNA ligase alpha subunit (360 aa).

E260 lines the Mg(2+) pocket.

Belongs to the class-II aminoacyl-tRNA synthetase family. Phe-tRNA synthetase alpha subunit type 1 subfamily. Tetramer of two alpha and two beta subunits. Mg(2+) is required as a cofactor.

It is found in the cytoplasm. It carries out the reaction tRNA(Phe) + L-phenylalanine + ATP = L-phenylalanyl-tRNA(Phe) + AMP + diphosphate + H(+). In Beijerinckia indica subsp. indica (strain ATCC 9039 / DSM 1715 / NCIMB 8712), this protein is Phenylalanine--tRNA ligase alpha subunit.